The following is a 461-amino-acid chain: Protein DVR-1 homolog (461 aa).

Residues 1–30 (MEYSRKTYLDLNIMAKYILILSLFFGPGLS) form the signal peptide. A propeptide spanning residues 31 to 338 (WDVFYSGDED…QKKGGKRPRK (308 aa)) is cleaved from the precursor. N149 carries N-linked (GlcNAc...) asparagine glycosylation. The disordered stretch occupies residues 317–351 (SHLRRNRRAATRQKKGGKRPRKPDTDNDIASRDSA). Positions 318-337 (HLRRNRRAATRQKKGGKRPR) are enriched in basic residues. Residues 338 to 347 (KPDTDNDIAS) show a composition bias toward basic and acidic residues. Cystine bridges form between C360-C426, C389-C458, and C393-C460. The N-linked (GlcNAc...) asparagine glycan is linked to N402.

The protein belongs to the TGF-beta family. In terms of assembly, homodimer; disulfide-linked.

The protein localises to the secreted. In Strongylocentrotus purpuratus (Purple sea urchin), this protein is Protein DVR-1 homolog (DVR1).